We begin with the raw amino-acid sequence, 557 residues long: Carboxypeptidase Y homolog A (557 aa).

The signal sequence occupies residues 1 to 17 (MRVLPAAMLVGAATAAV). A propeptide spanning residues 18-138 (PPFQQVLGGN…KLEAYDLRVK (121 aa)) is cleaved from the precursor. 5 disulfide bridges follow: C193–C433, C327–C341, C351–C374, C358–C367, and C396–C403. N-linked (GlcNAc...) asparagine glycosylation is present at N224. S280 is a catalytic residue. D472 is a catalytic residue. N523 is a glycosylation site (N-linked (GlcNAc...) asparagine). H534 is an active-site residue.

It belongs to the peptidase S10 family.

It is found in the vacuole. It catalyses the reaction Release of a C-terminal amino acid with broad specificity.. Vacuolar carboxypeptidase involved in degradation of small peptides. Digests preferentially peptides containing an aliphatic or hydrophobic residue in P1' position, as well as methionine, leucine or phenylalanine in P1 position of ester substrate. This Aspergillus niger (strain ATCC MYA-4892 / CBS 513.88 / FGSC A1513) protein is Carboxypeptidase Y homolog A (cpyA).